Consider the following 300-residue polypeptide: Fatty acid elongase 3 (300 aa).

The next 3 membrane-spanning stretches (helical) occupy residues 31–51 (VPAV…ENVM), 61–81 (FLNM…AYYC), and 127–147 (IFFD…KIPE). Residues 165–169 (HWYHH) carry the HxxHH motif motif. The active-site Nucleophile is His168. 4 helical membrane-spanning segments follow: residues 170–190 (ATVM…GLWF), 192–212 (TMNY…ACGM), 219–239 (IAPL…LIVL), and 261–283 (MGLL…SYIS).

The protein belongs to the ELO family.

Its subcellular location is the endoplasmic reticulum membrane. It carries out the reaction an acyl-CoA + malonyl-CoA + H(+) = a 3-oxoacyl-CoA + CO2 + CoA. Its pathway is lipid metabolism; fatty acid biosynthesis. Functionally, involved in the synthesis of fatty acids. Elongates C14 fatty acids to C18. Required for the maintenance of the global lipidome profile in this parasite. The chain is Fatty acid elongase 3 from Trypanosoma cruzi (strain CL Brener).